A 2635-amino-acid chain; its full sequence is Protein unc-79 homolog (2635 aa).

Phosphoserine occurs at positions 754 and 758. Disordered stretches follow at residues 907-929 (GPEGEEEENPASKHGENPGNCTE), 1538-1575 (IAQRPNDPGRSRQNSATRPDNSEIPENPAMEGFPDARR), 1607-1678 (LIDL…SVLS), 1693-1832 (SKDF…FKIQ), 1863-1909 (LGEQ…TQYR), and 1929-1950 (LEHQSSAPHNISNWDTEQIQPG). Positions 1666–1678 (SSPSVPSHPSVLS) are enriched in low complexity. Polar residues predominate over residues 1699–1713 (KDSGNNQSAGNTDSA). Residues 1761–1775 (LDDHPDPGTEGEKPG) are compositionally biased toward basic and acidic residues. Composition is skewed to polar residues over residues 1897 to 1909 (ETSSHSSISTQYR) and 1929 to 1947 (LEHQSSAPHNISNWDTEQI). 2 consecutive transmembrane segments (helical) span residues 2223-2243 (LLSFVIQNAVFTLAYLVELCG) and 2466-2486 (VLHMCSLFHAFIFAQLWTVYC).

The protein belongs to the unc-79 family. NALCN complex consists of NALCN and auxiliary subunits, UNC79, UNC80 and NACL1. These auxiliary subunits are essential for the NALCN channel function. UNC80 bridges NALCN to UNC79.

The protein localises to the cell membrane. In terms of biological role, auxiliary subunit of the NALCN sodium channel complex, a voltage-gated ion channel responsible for the resting Na(+) permeability that controls neuronal excitability. Activated by neuropeptides substance P, neurotensin, and extracellular calcium that regulates neuronal excitability by controlling the sizes of NALCN-dependent sodium-leak current. This is Protein unc-79 homolog (UNC79) from Homo sapiens (Human).